A 741-amino-acid polypeptide reads, in one-letter code: Wall-associated receptor kinase 3 (741 aa).

Positions 1–23 are cleaved as a signal peptide; the sequence is MKFQEGVFLVVIFFLAYTQLVKG. The Extracellular portion of the chain corresponds to 24-342; that stretch reads QHQPREDCKL…CTRPEYKRTR (319 aa). Asparagine 37, asparagine 59, asparagine 78, asparagine 100, asparagine 103, asparagine 141, asparagine 192, asparagine 199, asparagine 232, asparagine 246, asparagine 261, and asparagine 266 each carry an N-linked (GlcNAc...) asparagine glycan. Residues 245-292 enclose the EGF-like 1 domain; sequence GNQTCEQAGSTRICGKNSSCYNSTTRNGYICKCNEGYDGNPYRSEGCK. 6 disulfide bridges follow: cysteine 249–cysteine 264, cysteine 258–cysteine 275, cysteine 277–cysteine 291, cysteine 297–cysteine 310, cysteine 304–cysteine 319, and cysteine 321–cysteine 333. Residues 293–334 enclose the EGF-like 2; calcium-binding domain; that stretch reads DIDECISDTHNCSDPKTCRNRDGGFDCKCPSGYDLNSSMSCT. Asparagine 303 is a glycosylation site (N-linked (GlcNAc...) asparagine). Asparagine 328 is a glycosylation site (N-linked (GlcNAc...) asparagine). Residues 343–363 traverse the membrane as a helical segment; sequence IFLVIIIGVLVLLLAAICIQH. At 364–741 the chain is on the cytoplasmic side; that stretch reads ATKQRKYTKL…VAILDIETGR (378 aa). At threonine 404 the chain carries Phosphothreonine. The Protein kinase domain maps to 415–698; the sequence is YDESRILGQG…RVEKTKHKWS (284 aa). Residues 421–429 and lysine 443 contribute to the ATP site; that span reads LGQGGQGTV. At tyrosine 488 the chain carries Phosphotyrosine. Aspartate 540 (proton acceptor) is an active-site residue. A phosphothreonine mark is found at threonine 574 and threonine 579. A Phosphotyrosine modification is found at tyrosine 587.

It belongs to the protein kinase superfamily. Ser/Thr protein kinase family. As to expression, predominantly expressed in green tissues such as stems and leaves.

It is found in the membrane. It carries out the reaction L-seryl-[protein] + ATP = O-phospho-L-seryl-[protein] + ADP + H(+). It catalyses the reaction L-threonyl-[protein] + ATP = O-phospho-L-threonyl-[protein] + ADP + H(+). In terms of biological role, serine/threonine-protein kinase that may function as a signaling receptor of extracellular matrix component. Binding to pectin may have significance in the control of cell expansion, morphogenesis and development. The protein is Wall-associated receptor kinase 3 (WAK3) of Arabidopsis thaliana (Mouse-ear cress).